Here is a 161-residue protein sequence, read N- to C-terminus: Probable chemoreceptor glutamine deamidase CheD (161 aa).

The protein belongs to the CheD family.

It carries out the reaction L-glutaminyl-[protein] + H2O = L-glutamyl-[protein] + NH4(+). Probably deamidates glutamine residues to glutamate on methyl-accepting chemotaxis receptors (MCPs), playing an important role in chemotaxis. The chain is Probable chemoreceptor glutamine deamidase CheD from Lachnoclostridium phytofermentans (strain ATCC 700394 / DSM 18823 / ISDg) (Clostridium phytofermentans).